Here is a 501-residue protein sequence, read N- to C-terminus: MSTANKKPTESVSLNAFKQPKAFYLIFSIELWERFGYYGLQGIMAVYLVKQLGMSEADSITLFSSFSALVYGLVAIGGWLGDKILGTKRVIMLGAVVLAIGYALVAWSGHDAGIVYMGMAAIAVGNGLFKANPSSLLSTCYAKDDPRLDGAFTMYYMSVNIGSFFSMLATPWLAARYGWSTAFALSVVGMLITVVNFAFCQRWVKSYGSKPDFEPINFRNLLLTIVGIVVLIAVATWLLHNQDIARMVLGVIALGIVIIFGKEAFSMHGAARRKMIVAFILMLQAIIFFVLYSQMPTSLNFFAIRNVEHSILGIAFEPEQYQALNPFWIIIGSPILAAIYNRMGDTLPMPMKFAIGMVLCSGAFLILPLGAKFANDAGIVSVNWLIASYGLQSIGELMISGLGLAMVAQLVPQRLMGFIMGSWFLTTAGANIIGGYVANLMAVPSDVTDPLMSLEVYGRVFMQIGIATAVIAVLMLLTAPKLNRMTQDDDTAEKGSKAATV.

Residues 1–21 lie on the Cytoplasmic side of the membrane; that stretch reads MSTANKKPTESVSLNAFKQPK. Residues 22 to 44 form a helical membrane-spanning segment; the sequence is AFYLIFSIELWERFGYYGLQGIM. Topologically, residues 45-59 are periplasmic; the sequence is AVYLVKQLGMSEADS. A helical transmembrane segment spans residues 60-80; the sequence is ITLFSSFSALVYGLVAIGGWL. The Cytoplasmic portion of the chain corresponds to 81–89; sequence GDKILGTKR. The chain crosses the membrane as a helical span at residues 90–110; that stretch reads VIMLGAVVLAIGYALVAWSGH. Asp-111 is a topological domain (periplasmic). A helical membrane pass occupies residues 112 to 132; the sequence is AGIVYMGMAAIAVGNGLFKAN. Residues 133–153 are Cytoplasmic-facing; it reads PSSLLSTCYAKDDPRLDGAFT. The chain crosses the membrane as a helical span at residues 154 to 174; that stretch reads MYYMSVNIGSFFSMLATPWLA. At 175–178 the chain is on the periplasmic side; it reads ARYG. Residues 179-199 form a helical membrane-spanning segment; sequence WSTAFALSVVGMLITVVNFAF. The Cytoplasmic portion of the chain corresponds to 200–219; sequence CQRWVKSYGSKPDFEPINFR. A helical transmembrane segment spans residues 220-240; it reads NLLLTIVGIVVLIAVATWLLH. Residues 241–246 are Periplasmic-facing; sequence NQDIAR. Residues 247-267 form a helical membrane-spanning segment; that stretch reads MVLGVIALGIVIIFGKEAFSM. Over 268 to 274 the chain is Cytoplasmic; the sequence is HGAARRK. The chain crosses the membrane as a helical span at residues 275–295; the sequence is MIVAFILMLQAIIFFVLYSQM. Over 296 to 320 the chain is Periplasmic; that stretch reads PTSLNFFAIRNVEHSILGIAFEPEQ. Residues 321–341 traverse the membrane as a helical segment; the sequence is YQALNPFWIIIGSPILAAIYN. Residues 342 to 352 lie on the Cytoplasmic side of the membrane; that stretch reads RMGDTLPMPMK. The helical transmembrane segment at 353–373 threads the bilayer; sequence FAIGMVLCSGAFLILPLGAKF. At 374 to 383 the chain is on the periplasmic side; it reads ANDAGIVSVN. The chain crosses the membrane as a helical span at residues 384 to 404; the sequence is WLIASYGLQSIGELMISGLGL. Residues 405 to 414 lie on the Cytoplasmic side of the membrane; it reads AMVAQLVPQR. A helical transmembrane segment spans residues 415–435; sequence LMGFIMGSWFLTTAGANIIGG. Residues 436 to 459 lie on the Periplasmic side of the membrane; that stretch reads YVANLMAVPSDVTDPLMSLEVYGR. The helical transmembrane segment at 460-480 threads the bilayer; the sequence is VFMQIGIATAVIAVLMLLTAP. Residues 481-501 are Cytoplasmic-facing; sequence KLNRMTQDDDTAEKGSKAATV.

This sequence belongs to the major facilitator superfamily. Proton-dependent oligopeptide transporter (POT/PTR) (TC 2.A.17) family. DtpA subfamily.

The protein resides in the cell inner membrane. Its function is as follows. Proton-dependent permease that transports di- and tripeptides. This chain is Dipeptide and tripeptide permease A, found in Salmonella typhimurium (strain LT2 / SGSC1412 / ATCC 700720).